Consider the following 632-residue polypeptide: MKIEERDGLARIAKFETPHGPIETPTVLPVINPNIMNITPQEMKPLGLQGIITNSYIILRTPELRERALREGLHSLIGYDGPIMTDSGTFQSYVYGSIEFNNREVVDFQRRIGSDISTILDVFTTPGTPKPEAEKAVIETYNRMLEVNDEEGIIAGPVQGGVYPDLRQKSAELMNSTNAGYHPIGGVVPLLETYDYSTLVDIIINSKINLSFNKPVHLFGGGHPMFFAFSVYLGVDLFDSASYIKYAKDDRLIYPDGTRDLARITELPQWSPLYDRYTVKEIRDLDKERRSLEIARHNLKAIFMEISEIKERIYEEGLAQYVAQKARSHPSLMKAYSRIMSYSNILEKYEDLSKKTAYFFYDSFSTRNPYVSRINRFTESYLSSNKKDTYAFTYRAWNPGYTNSEFVRDVYQKIDCNALISWSGTFVPAELENTYPIEQTVSSGFEPDPDFSRAKDLIAPFRVDMYKGEKFEGEQVRSFNLNKIRMVADYQFGSGVGRMIFRDDVRINVSKTGRIRGILSKEGRQIATMRNDGFFTLTYYGASLIHSQLKPPAMRVTVSKESAEYNAKGYSVFFKFILGSDENIIAKNDVLVVDEDDVLAAVGKAMVSGRELREYTEGIAVKVHEGRDQSEK.

The active-site Nucleophile is Asp-86. Positions 121 and 186 each coordinate substrate. The PUA domain maps to 553–628; that stretch reads AMRVTVSKES…IAVKVHEGRD (76 aa).

This sequence belongs to the archaeosine tRNA-ribosyltransferase family. It depends on Zn(2+) as a cofactor.

The enzyme catalyses guanosine(15) in tRNA + 7-cyano-7-deazaguanine = 7-cyano-7-carbaguanosine(15) in tRNA + guanine. It functions in the pathway tRNA modification; archaeosine-tRNA biosynthesis. Functionally, exchanges the guanine residue with 7-cyano-7-deazaguanine (preQ0) at position 15 in the dihydrouridine loop (D-loop) of archaeal tRNAs. The polypeptide is tRNA-guanine(15) transglycosylase (Thermoplasma acidophilum (strain ATCC 25905 / DSM 1728 / JCM 9062 / NBRC 15155 / AMRC-C165)).